Here is a 757-residue protein sequence, read N- to C-terminus: Cartilage oligomeric matrix protein (757 aa).

The N-terminal stretch at 1–20 is a signal peptide; sequence MVPDTACVLLLTLAALGASG. The interval 22–86 is COMP N-terminal; that stretch reads GQSPLGSDLG…SVRTGLPSVR (65 aa). The region spanning 87–126 is the EGF-like 1 domain; sequence PLLHCAPGFCFPGVACIQTESGARCGPCPAGFTGNGSHCT. 21 disulfide bridges follow: Cys-91–Cys-102, Cys-96–Cys-111, Cys-114–Cys-125, Cys-131–Cys-142, Cys-136–Cys-151, Cys-154–Cys-178, Cys-184–Cys-197, Cys-191–Cys-206, Cys-209–Cys-221, Cys-229–Cys-243, Cys-237–Cys-253, Cys-255–Cys-266, Cys-282–Cys-287, Cys-292–Cys-312, Cys-328–Cys-348, Cys-351–Cys-371, Cys-387–Cys-407, Cys-410–Cys-430, Cys-448–Cys-468, Cys-484–Cys-504, and Cys-520–Cys-741. N-linked (GlcNAc...) asparagine glycosylation occurs at Asn-121. Residues 127–179 form the EGF-like 2; calcium-binding domain; sequence DVNECNAHPCFPRVRCINTSPGFRCEACPPGYSGPTHQGVGLAFAKANKQVCT. Positions 180–222 constitute an EGF-like 3; calcium-binding domain; that stretch reads DINECETGQHNCVPNSVCINTRGSFQCGPCQPGFVGDQASGCQ. The EGF-like 4 domain occupies 225 to 267; that stretch reads AQRFCPDGSPSECHEHADCVLERDGSRSCVCAVGWAGNGILCG. TSP type-3 repeat units lie at residues 268–300, 301–336, 337–359, 360–395, 396–418, 419–456, 457–492, and 493–528; these read RDTD…NSGQ, EDVD…NPDQ, RNTD…NDDQ, KDTD…NSDQ, KDSD…NPDQ, ADVD…NSAQ, EDSD…NPGQ, and EDAD…EVTL. Positions 298–503 are disordered; it reads SGQEDVDRDG…DADRDGVGDV (206 aa). 2 stretches are compositionally biased toward basic and acidic residues: residues 334-346 and 352-370; these read PDQR…KWGD and RSQK…RGDA. A Cell attachment site motif is present at residues 367-369; it reads RGD. Positions 467 to 476 are enriched in acidic residues; sequence ACDDDDDNDG. The mediates cell survival and induction of the IAP family of survival proteins stretch occupies residues 527–757; sequence TLTDFRAFQT…DYETHQLRQA (231 aa). A TSP C-terminal domain is found at 532 to 746; sequence RAFQTVVLDP…LRYRCNDTIP (215 aa). Asn-742 carries N-linked (GlcNAc...) asparagine glycosylation.

It belongs to the thrombospondin family. In terms of assembly, pentamer; disulfide-linked. Exists in a more compact conformation in the presence of calcium and shows a more extended conformation in the absence of calcium. Interacts with ITGB3, ITGA5 and FN1. Binding to FN1 requires the presence of divalent cations (Ca(2+), Mg(2+) or Mn(2+)). The greatest amount of binding is seen in the presence of Mn(2+). Interacts with MATN1, MATN3, MATN4 and ACAN. Binds heparin, heparan sulfate and chondroitin sulfate. EDTA dimishes significantly its binding to ACAN and abolishes its binding to MATN3, MATN4 and chondroitin sulfate. Interacts with collagen I, II and IX, and interaction with these collagens is dependent on the presence of zinc ions. Interacts with ADAMTS12. Interacts with ITGA7. Requires Ca(2+) as cofactor. In terms of processing, proteolytically cleaved by metalloproteases ADAMTS4 and ADAMTS1 with ADAMTS4 showing more potent activity. Abundantly expressed in the chondrocyte extracellular matrix, and is also found in bone, tendon, ligament and synovium and blood vessels. Increased amounts are produced during late stages of osteoarthritis in the area adjacent to the main defect.

The protein resides in the secreted. The protein localises to the extracellular space. It is found in the extracellular matrix. Its function is as follows. Plays a role in the structural integrity of cartilage via its interaction with other extracellular matrix proteins such as the collagens and fibronectin. Can mediate the interaction of chondrocytes with the cartilage extracellular matrix through interaction with cell surface integrin receptors. Could play a role in the pathogenesis of osteoarthritis. Potent suppressor of apoptosis in both primary chondrocytes and transformed cells. Suppresses apoptosis by blocking the activation of caspase-3 and by inducing the IAP family of survival proteins (BIRC3, BIRC2, BIRC5 and XIAP). Essential for maintaining a vascular smooth muscle cells (VSMCs) contractile/differentiated phenotype under physiological and pathological stimuli. Maintains this phenotype of VSMCs by interacting with ITGA7. The sequence is that of Cartilage oligomeric matrix protein from Homo sapiens (Human).